The primary structure comprises 277 residues: MAISSNTSRTTRKLLWTLFWCVLAFVYLFPYTWMVLTGFRHGVDTISMPPRFIFEPTLAGFKHLFEVTGFQKYIINSAVVTIVSVVLVIAVSAPAAYALAHVTKRGGTLLVAILVARIIPGIAIGVPVYLLATRLHQLDTYQALIIINVAVNIPFAIWLMRSFFMEVHPTLREAAISDGCSEWQVFTKIMMPLVLGGMLATAVFVFIAVWNEFLFALILTTSVSPTAPLAMLGFRTQYGVQWDAVGAAAFLVSTPVIAFAFIMQRYLVQGLTMGSVK.

7 helical membrane passes run 15-35 (LWTL…TWMV), 79-99 (VVTI…AYAL), 109-129 (LLVA…VPVY), 140-160 (TYQA…IWLM), 189-209 (IMMP…FIAV), 213-233 (FLFA…AMLG), and 242-262 (WDAV…FAFI). One can recognise an ABC transmembrane type-1 domain in the interval 74-263 (IINSAVVTIV…TPVIAFAFIM (190 aa)).

It belongs to the binding-protein-dependent transport system permease family. MalFG subfamily.

The protein localises to the cell inner membrane. Probably part of the binding-protein-dependent transport system y4oPQRS. This system probably transports a sugar-like molecule. Probably responsible for the translocation of the substrate across the membrane. This chain is Probable ABC transporter permease protein y4oR, found in Sinorhizobium fredii (strain NBRC 101917 / NGR234).